The sequence spans 259 residues: Flap endonuclease Xni (259 aa).

Aspartate 109 contacts Mg(2+). The region spanning 165-255 (VKPQQLSDYW…FNLQDLRFTA (91 aa)) is the 5'-3' exonuclease domain. Positions 176, 187, and 190 each coordinate K(+). The tract at residues 189–194 (GIGPKA) is interaction with DNA.

It belongs to the Xni family. Requires Mg(2+) as cofactor. It depends on K(+) as a cofactor.

In terms of biological role, has flap endonuclease activity. During DNA replication, flap endonucleases cleave the 5'-overhanging flap structure that is generated by displacement synthesis when DNA polymerase encounters the 5'-end of a downstream Okazaki fragment. The protein is Flap endonuclease Xni of Vibrio vulnificus (strain CMCP6).